Reading from the N-terminus, the 89-residue chain is MPRSTKKGPFFDHHLIKKVESAAGSKRPIKTCSRRSVILPQMVGHTIAIHNGKNYHPVVINENMVGHKLGEFSITRVFKGHCGDKKSGK.

This sequence belongs to the universal ribosomal protein uS19 family.

Protein S19 forms a complex with S13 that binds strongly to the 16S ribosomal RNA. This Xylella fastidiosa (strain M23) protein is Small ribosomal subunit protein uS19.